Here is a 105-residue protein sequence, read N- to C-terminus: Heat shock protein HspQ (105 aa).

The segment at 80 to 105 (AHPEQPSLDELAASIRHQLQAPHLRN) is disordered.

Belongs to the HspQ family.

The protein localises to the cytoplasm. Involved in the degradation of certain denaturated proteins, including DnaA, during heat shock stress. The chain is Heat shock protein HspQ from Yersinia pseudotuberculosis serotype O:1b (strain IP 31758).